A 209-amino-acid polypeptide reads, in one-letter code: Urease accessory protein UreG (209 aa).

GTP is bound at residue 18 to 25 (GPVGSGKT).

The protein belongs to the SIMIBI class G3E GTPase family. UreG subfamily. In terms of assembly, homodimer. UreD, UreF and UreG form a complex that acts as a GTP-hydrolysis-dependent molecular chaperone, activating the urease apoprotein by helping to assemble the nickel containing metallocenter of UreC. The UreE protein probably delivers the nickel.

Its subcellular location is the cytoplasm. Functionally, facilitates the functional incorporation of the urease nickel metallocenter. This process requires GTP hydrolysis, probably effectuated by UreG. The sequence is that of Urease accessory protein UreG from Cupriavidus necator (strain ATCC 17699 / DSM 428 / KCTC 22496 / NCIMB 10442 / H16 / Stanier 337) (Ralstonia eutropha).